The chain runs to 399 residues: Succinate--CoA ligase [ADP-forming] subunit beta (399 aa).

Residues 9 to 254 (KAVLAEFGAP…ESEEDPKEIE (246 aa)) enclose the ATP-grasp domain. Residues Lys46, 53 to 55 (GRG), Glu109, Ala112, and Glu117 each bind ATP. The Mg(2+) site is built by Asn209 and Asp223. Substrate is bound by residues Asn274 and 331–333 (GIM).

Belongs to the succinate/malate CoA ligase beta subunit family. In terms of assembly, heterotetramer of two alpha and two beta subunits. Mg(2+) serves as cofactor.

The enzyme catalyses succinate + ATP + CoA = succinyl-CoA + ADP + phosphate. It catalyses the reaction GTP + succinate + CoA = succinyl-CoA + GDP + phosphate. It participates in carbohydrate metabolism; tricarboxylic acid cycle; succinate from succinyl-CoA (ligase route): step 1/1. Its function is as follows. Succinyl-CoA synthetase functions in the citric acid cycle (TCA), coupling the hydrolysis of succinyl-CoA to the synthesis of either ATP or GTP and thus represents the only step of substrate-level phosphorylation in the TCA. The beta subunit provides nucleotide specificity of the enzyme and binds the substrate succinate, while the binding sites for coenzyme A and phosphate are found in the alpha subunit. This Caulobacter vibrioides (strain NA1000 / CB15N) (Caulobacter crescentus) protein is Succinate--CoA ligase [ADP-forming] subunit beta.